The sequence spans 515 residues: Maturase K (515 aa).

It belongs to the intron maturase 2 family. MatK subfamily.

The protein localises to the plastid. The protein resides in the chloroplast. In terms of biological role, usually encoded in the trnK tRNA gene intron. Probably assists in splicing its own and other chloroplast group II introns. The sequence is that of Maturase K from Pinus koraiensis (Korean pine).